A 139-amino-acid chain; its full sequence is Large ribosomal subunit protein bL17 (139 aa).

The protein belongs to the bacterial ribosomal protein bL17 family. In terms of assembly, part of the 50S ribosomal subunit. Contacts protein L32.

The polypeptide is Large ribosomal subunit protein bL17 (Sphingopyxis alaskensis (strain DSM 13593 / LMG 18877 / RB2256) (Sphingomonas alaskensis)).